A 464-amino-acid chain; its full sequence is Protein FAM90A26 (464 aa).

Disordered regions lie at residues 1–42, 70–293, 312–390, and 410–442; these read MMAC…DPRL, PPTL…AKRP, PFQI…DGAQ, and AAPS…VRVP. Basic and acidic residues-rich tracts occupy residues 74–83 and 97–114; these read GKKEGKENLK and NKDK…DPQR. Residues 178-197 are compositionally biased toward low complexity; that stretch reads SALASLSPLRKASLSSSSSL.

The protein belongs to the FAM90 family.

The polypeptide is Protein FAM90A26 (Homo sapiens (Human)).